Here is a 335-residue protein sequence, read N- to C-terminus: Glucokinase (335 aa).

Residue 11–16 participates in ATP binding; sequence ADIGGT.

The protein belongs to the bacterial glucokinase family.

The protein resides in the cytoplasm. It carries out the reaction D-glucose + ATP = D-glucose 6-phosphate + ADP + H(+). This is Glucokinase from Xanthomonas campestris pv. campestris (strain 8004).